The sequence spans 296 residues: Peptide transport system permease protein SapC (296 aa).

The Cytoplasmic portion of the chain corresponds to 1 to 28; it reads MPYDSVYSEKRPPGTLRTAWRKFYSDAS. Residues 29–49 form a helical membrane-spanning segment; the sequence is AMVGLYGCAGLAVLCIFGGWF. At 50 to 98 the chain is on the periplasmic side; the sequence is APYGIDQQFLGYQLLPPSWSRYGEVSFFLGTDDLGRDVLSRLLSGAAPT. A helical transmembrane segment spans residues 99-119; sequence VGGAFVVTLAATICGLVLGTF. Residues 99–284 form the ABC transmembrane type-1 domain; sequence VGGAFVVTLA…ISVLLVNLLG (186 aa). Over 120-133 the chain is Cytoplasmic; the sequence is AGATHGLRSAVLNH. The helical transmembrane segment at 134 to 154 threads the bilayer; it reads ILDTLLAIPSLLLAIIVVAFA. Residues 155-196 are Periplasmic-facing; it reads GPSLSHAMFAVWLALLPRMVRSIYSMVHDELEKEYVIAARLD. The helical transmembrane segment at 197 to 217 threads the bilayer; that stretch reads GASTLNILWFAVMPNITAGLV. Over 218–222 the chain is Cytoplasmic; that stretch reads TEITR. Residues 223–243 traverse the membrane as a helical segment; sequence ALSMAILDIAALGFLDLGAQL. Topologically, residues 244–257 are periplasmic; that stretch reads PSPEWGAMLGDALE. Residues 258 to 278 form a helical membrane-spanning segment; sequence LIYVAPWTVMLPGAAIMISVL. Topologically, residues 279-296 are cytoplasmic; the sequence is LVNLLGDGVRRAIIAGVE.

The protein belongs to the binding-protein-dependent transport system permease family. OppBC subfamily.

It localises to the cell inner membrane. Functionally, involved in a peptide intake transport system that plays a role in the resistance to antimicrobial peptides. The chain is Peptide transport system permease protein SapC (sapC) from Escherichia coli O6:H1 (strain CFT073 / ATCC 700928 / UPEC).